The sequence spans 279 residues: Thymidylate synthase (279 aa).

133 to 134 (RR) is a binding site for dUMP. Cysteine 154 (nucleophile) is an active-site residue. DUMP contacts are provided by residues 178 to 181 (RSND), asparagine 189, and 219 to 221 (HIY). Aspartate 181 contributes to the (6R)-5,10-methylene-5,6,7,8-tetrahydrofolate binding site. Alanine 278 contributes to the (6R)-5,10-methylene-5,6,7,8-tetrahydrofolate binding site.

The protein belongs to the thymidylate synthase family. Bacterial-type ThyA subfamily. Homodimer.

The protein localises to the cytoplasm. The enzyme catalyses dUMP + (6R)-5,10-methylene-5,6,7,8-tetrahydrofolate = 7,8-dihydrofolate + dTMP. It participates in pyrimidine metabolism; dTTP biosynthesis. Its function is as follows. Catalyzes the reductive methylation of 2'-deoxyuridine-5'-monophosphate (dUMP) to 2'-deoxythymidine-5'-monophosphate (dTMP) while utilizing 5,10-methylenetetrahydrofolate (mTHF) as the methyl donor and reductant in the reaction, yielding dihydrofolate (DHF) as a by-product. This enzymatic reaction provides an intracellular de novo source of dTMP, an essential precursor for DNA biosynthesis. This Streptococcus pyogenes serotype M6 (strain ATCC BAA-946 / MGAS10394) protein is Thymidylate synthase.